A 715-amino-acid polypeptide reads, in one-letter code: 1,4-alpha-glucan branching enzyme GlgB (715 aa).

Asp396 (nucleophile) is an active-site residue. The active-site Proton donor is Glu449.

The protein belongs to the glycosyl hydrolase 13 family. GlgB subfamily. As to quaternary structure, monomer.

The catalysed reaction is Transfers a segment of a (1-&gt;4)-alpha-D-glucan chain to a primary hydroxy group in a similar glucan chain.. It functions in the pathway glycan biosynthesis; glycogen biosynthesis. Functionally, catalyzes the formation of the alpha-1,6-glucosidic linkages in glycogen by scission of a 1,4-alpha-linked oligosaccharide from growing alpha-1,4-glucan chains and the subsequent attachment of the oligosaccharide to the alpha-1,6 position. The polypeptide is 1,4-alpha-glucan branching enzyme GlgB (Aliivibrio fischeri (strain ATCC 700601 / ES114) (Vibrio fischeri)).